A 1770-amino-acid polypeptide reads, in one-letter code: U3 small nucleolar RNA-associated protein 10 (1770 aa).

Transmembrane regions (helical) follow at residues 499–519 and 528–548; these read ILGL…FLSS and LTFL…RLLA. An HEAT repeat occupies 1730 to 1768; sequence MVPIIAELLEDDNEEVESEVRGGLVRVMENVLGEPFDRY.

It belongs to the HEATR1/UTP10 family. In terms of assembly, component of the ribosomal small subunit (SSU) processome.

Its subcellular location is the nucleus. It localises to the nucleolus. The protein resides in the membrane. In terms of biological role, involved in nucleolar processing of pre-18S ribosomal RNA. Involved in ribosome biosynthesis. The polypeptide is U3 small nucleolar RNA-associated protein 10 (Candida glabrata (strain ATCC 2001 / BCRC 20586 / JCM 3761 / NBRC 0622 / NRRL Y-65 / CBS 138) (Yeast)).